A 138-amino-acid polypeptide reads, in one-letter code: MMELQYNGQGYSKRFSRELVALMCAGAVSGIDWRRSSRRRLRVRDARVFSRLQRCSERYFWPDGTRFWCHARKRRRSPSLPARRPPTPREDALEDYAKEYGYDREDGEIYDREDGEIYDREDGEITPVYTRLKSLVVK.

Residues 74-96 are disordered; sequence RRRSPSLPARRPPTPREDALEDY. The span at 87 to 96 shows a compositional bias: basic and acidic residues; the sequence is TPREDALEDY.

This is an uncharacterized protein from Orgyia pseudotsugata (Douglas-fir tussock moth).